The following is a 538-amino-acid chain: Myeloid cell nuclear differentiation antigen-like protein (538 aa).

One can recognise a Pyrin domain in the interval 1 to 87 (MAEYKKIVLL…AKKLKTEKAK (87 aa)). Positions 120-306 (SYKSVPSSKK…PQPQNQNIPR (187 aa)) are disordered. Composition is skewed to basic and acidic residues over residues 135-153 (AKTE…DHLP) and 245-262 (RREE…KEPD). The segment covering 276-305 (SPILHSSSSASSNIPSATNQKPQPQNQNIP) has biased composition (low complexity). One can recognise an HIN-200 domain in the interval 299–499 (PQNQNIPRGA…CGDHSFVKIK (201 aa)).

It belongs to the HIN-200 family. As to expression, highest expression observed in spleen and thymus with moderate levels in bone marrow, lung, skin and heart, low levels in muscle, liver and intestine and little or no expression in brain and pancreas.

It is found in the nucleus. Its function is as follows. Suppresses cell growth when expressed ectopically. The sequence is that of Myeloid cell nuclear differentiation antigen-like protein from Mus musculus (Mouse).